Consider the following 325-residue polypeptide: Cyclic AMP-responsive element-binding protein 1 (325 aa).

Polar residues-rich tracts occupy residues 1–11 (MESGAENQQSG) and 18–27 (AESQQMTVQA). Disordered stretches follow at residues 1-27 (MESG…TVQA) and 92-111 (SEDS…RREI). Positions 85–144 (QISTIAESEDSQESVDSVTDSQKRREILSRRPSYRKILNDLSSDAPGVPRIEEEKSEEET) constitute a KID domain. Ser-117 carries the post-translational modification Phosphoserine; by CaMK1, CaMK2, CaMK4, PKB/AKT1 or PKB/AKT2, RPS6KA3, RPS6KA4, RPS6KA5 and SGK1. Residue Lys-120 forms a Glycyl lysine isopeptide (Lys-Gly) (interchain with G-Cter in SUMO2) linkage. The disordered stretch occupies residues 124–146 (DLSSDAPGVPRIEEEKSEEETSA). Ser-126 bears the Phosphoserine; by CaMK2 mark. At Ser-255 the chain carries Phosphoserine; by HIPK2. The 59-residue stretch at 267-325 (ARKREVRLMKNREAARECRRKKKEYVKCLENRVAVLENQNKTLIEELKALKDLYCHKSD) folds into the bZIP domain. The segment at 268–293 (RKREVRLMKNREAARECRRKKKEYVK) is basic motif. Residues Lys-269 and Lys-288 each participate in a glycyl lysine isopeptide (Lys-Gly) (interchain with G-Cter in SUMO1) cross-link. The interval 295 to 316 (LENRVAVLENQNKTLIEELKAL) is leucine-zipper.

The protein belongs to the bZIP family. In terms of assembly, interacts with PPRC1. Binds DNA as a dimer. This dimer is stabilized by magnesium ions. Interacts, through the bZIP domain, with the coactivators CRTC1/TORC1, CRTC2/TORC2 and CRTC3/TORC3. When phosphorylated on Ser-117, binds CREBBP. Interacts with CREBL2; regulates CREB1 phosphorylation, stability and transcriptional activity. Interacts (phosphorylated form) with TOX3. Interacts with ARRB1. Binds to HIPK2. Interacts with SGK1. Interacts with TSSK4; this interaction facilitates phosphorylation on Ser-117. Forms a complex with KMT2A and CREBBP. Interacts with TOX4; CREB1 is required for full induction of TOX4-dependent activity and the interaction is increased by cAMP and inhibited by insulin. Sumoylated with SUMO1. Sumoylation on Lys-288, but not on Lys-269, is required for nuclear localization of this protein. Sumoylation is enhanced under hypoxia, promoting nuclear localization and stabilization. In terms of processing, stimulated by phosphorylation. Phosphorylation of both Ser-117 and Ser-126 in the SCN regulates the activity of CREB and participates in circadian rhythm generation. Phosphorylation of Ser-117 allows CREBBP binding. Phosphorylated upon calcium influx by CaMK4 and CaMK2 on Ser-117. CaMK4 is much more potent than CaMK2 in activating CREB. Phosphorylated by CaMK2 on Ser-126. Phosphorylation of Ser-126 blocks CREB-mediated transcription even when Ser-117 is phosphorylated. Phosphorylated by CaMK1. Phosphorylation of Ser-255 by HIPK2 in response to genotoxic stress promotes CREB1 activity, facilitating the recruitment of the coactivator CBP. Phosphorylated at Ser-117 by RPS6KA3, RPS6KA4 and RPS6KA5 in response to mitogenic or stress stimuli. CREBL2 positively regulates phosphorylation at Ser-117 thereby stimulating CREB1 transcriptional activity. In liver, phosphorylation is induced by fasting or glucagon in a circadian fashion. Phosphorylated by TSSK4 on Ser-117.

It localises to the nucleus. Its function is as follows. Phosphorylation-dependent transcription factor that stimulates transcription upon binding to the DNA cAMP response element (CRE), a sequence present in many viral and cellular promoters. Transcription activation is enhanced by the TORC coactivators which act independently of Ser-117 phosphorylation. Involved in different cellular processes including the synchronization of circadian rhythmicity and the differentiation of adipose cells. Regulates the expression of apoptotic and inflammatory response factors in cardiomyocytes in response to ERFE-mediated activation of AKT signaling. The polypeptide is Cyclic AMP-responsive element-binding protein 1 (CREB1) (Bos taurus (Bovine)).